The sequence spans 373 residues: Dual-specificity RNA methyltransferase RlmN (373 aa).

Residue glutamate 94 is the Proton acceptor of the active site. In terms of domain architecture, Radical SAM core spans 100–339; that stretch reads EDDRATLCVS…VIVRKTRGDD (240 aa). Cysteines 107 and 344 form a disulfide. Positions 114, 118, and 121 each coordinate [4Fe-4S] cluster. S-adenosyl-L-methionine is bound by residues 168 to 169, serine 200, 222 to 224, and asparagine 301; these read GE and SIH. Residue cysteine 344 is the S-methylcysteine intermediate of the active site.

It belongs to the radical SAM superfamily. RlmN family. Requires [4Fe-4S] cluster as cofactor.

The protein resides in the cytoplasm. The enzyme catalyses adenosine(2503) in 23S rRNA + 2 reduced [2Fe-2S]-[ferredoxin] + 2 S-adenosyl-L-methionine = 2-methyladenosine(2503) in 23S rRNA + 5'-deoxyadenosine + L-methionine + 2 oxidized [2Fe-2S]-[ferredoxin] + S-adenosyl-L-homocysteine. The catalysed reaction is adenosine(37) in tRNA + 2 reduced [2Fe-2S]-[ferredoxin] + 2 S-adenosyl-L-methionine = 2-methyladenosine(37) in tRNA + 5'-deoxyadenosine + L-methionine + 2 oxidized [2Fe-2S]-[ferredoxin] + S-adenosyl-L-homocysteine. Functionally, specifically methylates position 2 of adenine 2503 in 23S rRNA and position 2 of adenine 37 in tRNAs. m2A2503 modification seems to play a crucial role in the proofreading step occurring at the peptidyl transferase center and thus would serve to optimize ribosomal fidelity. The protein is Dual-specificity RNA methyltransferase RlmN of Shewanella oneidensis (strain ATCC 700550 / JCM 31522 / CIP 106686 / LMG 19005 / NCIMB 14063 / MR-1).